The chain runs to 464 residues: NADH dehydrogenase [ubiquinone] flavoprotein 1, mitochondrial (464 aa).

The N-terminal 20 residues, 1 to 20, are a transit peptide targeting the mitochondrion; the sequence is MLATRRLLGWSLPARVSVRF. Residue K81 is modified to N6-acetyllysine; alternate. K81 is subject to N6-succinyllysine; alternate. 87-96 contacts NADH; sequence GRGGAGFPTG. The residue at position 104 (K104) is an N6-acetyllysine. 199-247 serves as a coordination point for FMN; sequence RGAGAYICGEETALIESIEGKQGKPRLKPPFPADVGVFGCPTTVANVET. R257 carries the post-translational modification Omega-N-methylarginine. K375 carries the post-translational modification N6-acetyllysine. 4 residues coordinate [4Fe-4S] cluster: C379, C382, C385, and C425.

The protein belongs to the complex I 51 kDa subunit family. In terms of assembly, core subunit of respiratory chain NADH dehydrogenase (Complex I) which is composed of 45 different subunits. This is a component of the flavoprotein-sulfur (FP) fragment of the enzyme. Interacts with RAB5IF. Requires FMN as cofactor. [4Fe-4S] cluster serves as cofactor.

The protein localises to the mitochondrion inner membrane. The enzyme catalyses a ubiquinone + NADH + 5 H(+)(in) = a ubiquinol + NAD(+) + 4 H(+)(out). Its function is as follows. Core subunit of the mitochondrial membrane respiratory chain NADH dehydrogenase (Complex I) which catalyzes electron transfer from NADH through the respiratory chain, using ubiquinone as an electron acceptor. Part of the peripheral arm of the enzyme, where the electrons from NADH are accepted by flavin mononucleotide (FMN) and then passed along a chain of iron-sulfur clusters by electron tunnelling to the final acceptor ubiquinone. Contains FMN, which is the initial electron acceptor as well as one iron-sulfur cluster. This Homo sapiens (Human) protein is NADH dehydrogenase [ubiquinone] flavoprotein 1, mitochondrial.